We begin with the raw amino-acid sequence, 130 residues long: MDKINKIKINETEYYHSDDILALKMKKFDKCVNGRRLIDDFNIKKPNFIYAAFKDDEWIKTDGRSRKFDKVFVKVSWFENYIQENDSDDDCSENDSDGDCSENDSDNDYSENESDCELYNEKNNKCTRYY.

The disordered stretch occupies residues 85 to 116; that stretch reads NDSDDDCSENDSDGDCSENDSDNDYSENESDC.

The protein belongs to the mimivirus L5 family.

This is an uncharacterized protein from Acanthamoeba polyphaga mimivirus (APMV).